The following is a 485-amino-acid chain: Dipeptide and tripeptide permease C (485 aa).

At 1–12 (MKTPSQPRAIYY) the chain is on the cytoplasmic side. The chain crosses the membrane as a helical span at residues 13–33 (IVAIQIWEYFSFYGMRALLIL). Residues 34-46 (YLTHQLGFDDNHA) are Periplasmic-facing. A helical membrane pass occupies residues 47 to 67 (ISLFSAYASLVYVTPILGGWL). At 68-70 (ADR) the chain is on the cytoplasmic side. A helical membrane pass occupies residues 71-93 (LLGNRTAVIAGALLMTLGHVVLG). Topologically, residues 94–102 (IDTNSTFSL) are periplasmic. A helical membrane pass occupies residues 103–125 (YLALAIIICGYGLFKSNISCLLG). The Cytoplasmic segment spans residues 126-140 (ELYDENDHRRDGGFS). Residues 141 to 161 (LLYAAGNIGSIAAPIACGLAA) form a helical membrane-spanning segment. Over 162-164 (QWY) the chain is Periplasmic. The helical transmembrane segment at 165–185 (GWHVGFALAGGGMFIGLLIFL) threads the bilayer. Over 186 to 208 (SGHRHFQSTRSMDKKALTSVKFA) the chain is Cytoplasmic. Residues 209–229 (LPVWSWLVVMLCLAPVFFTLL) traverse the membrane as a helical segment. At 230-234 (LENDW) the chain is on the periplasmic side. A helical membrane pass occupies residues 235-255 (SGYLLAIVCLIAAQIIARMMI). The Cytoplasmic portion of the chain corresponds to 256–262 (KFPEHRR). The helical transmembrane segment at 263 to 283 (ALWQIVLLMFVGTLFWVLAQQ) threads the bilayer. Residues 284 to 307 (GGSTISLFIDRFVNRQAFNIEVPT) lie on the Periplasmic side of the membrane. A helical membrane pass occupies residues 308 to 328 (ALFQSVNAIAVMLAGVVLAWL). Residues 329–340 (ASPESRGNSTLR) lie on the Cytoplasmic side of the membrane. Residues 341 to 361 (VWLKFAFGLLLMACGFMLLAF) traverse the membrane as a helical segment. Residues 362–375 (DARHAAADGQASMG) are Periplasmic-facing. Residues 376–396 (VMISGLALMGFAELFIDPVAI) form a helical membrane-spanning segment. At 397–406 (AQITRLKMSG) the chain is on the cytoplasmic side. A helical membrane pass occupies residues 407-427 (VLTGIYMLATGAVANWLAGVV). At 428–446 (AQQTTESQISGMAIAAYQR) the chain is on the periplasmic side. The chain crosses the membrane as a helical span at residues 447-467 (FFSQMGEWTLACVAIIVVLAF). Over 468–485 (ATRFLFSTPTNMIQESND) the chain is Cytoplasmic.

The protein belongs to the major facilitator superfamily. Proton-dependent oligopeptide transporter (POT/PTR) (TC 2.A.17) family. Monomer.

It localises to the cell inner membrane. Functionally, proton-dependent permease that transports di- and tripeptides. Shows significantly higher specificity towards dipeptides than tripeptides. Has a preference for dipeptides with a C-terminal Lys residue. Can bind Ala-Lys, Lys-Ala, Ala-Ala. Can also transport alanine and trialanine. The protein is Dipeptide and tripeptide permease C of Escherichia coli (strain K12).